We begin with the raw amino-acid sequence, 135 residues long: Small ribosomal subunit protein bS6 (135 aa).

The segment at 98–135 is disordered; that stretch reads EASPMAKAKDERDARRAAISERSSEADEVEENAEESAE. The span at 104-122 shows a compositional bias: basic and acidic residues; that stretch reads KAKDERDARRAAISERSSE. Residues 123–135 show a composition bias toward acidic residues; sequence ADEVEENAEESAE.

It belongs to the bacterial ribosomal protein bS6 family.

Functionally, binds together with bS18 to 16S ribosomal RNA. This is Small ribosomal subunit protein bS6 from Shewanella amazonensis (strain ATCC BAA-1098 / SB2B).